Consider the following 704-residue polypeptide: Elongation factor G (704 aa).

In terms of domain architecture, tr-type G spans 8 to 291; that stretch reads DKVRNIGIMA…AVVEYLASPV (284 aa). Residues 17 to 24, 90 to 94, and 144 to 147 contribute to the GTP site; these read AHIDAGKT, DTPGH, and NKMD.

It belongs to the TRAFAC class translation factor GTPase superfamily. Classic translation factor GTPase family. EF-G/EF-2 subfamily.

The protein resides in the cytoplasm. Catalyzes the GTP-dependent ribosomal translocation step during translation elongation. During this step, the ribosome changes from the pre-translocational (PRE) to the post-translocational (POST) state as the newly formed A-site-bound peptidyl-tRNA and P-site-bound deacylated tRNA move to the P and E sites, respectively. Catalyzes the coordinated movement of the two tRNA molecules, the mRNA and conformational changes in the ribosome. The polypeptide is Elongation factor G (Chlorobium limicola (strain DSM 245 / NBRC 103803 / 6330)).